The chain runs to 1338 residues: Centrosomal P4.1-associated protein (1338 aa).

The interval 190–211 (GLSLLPDDQSQKHRSPGNTTTG) is disordered. Phosphoserine is present on residues serine 260 and serine 316. The interval 319-394 (VANIEERPIK…FTNAKSKFQK (76 aa)) is alpha/beta-tubulin binding. 3 disordered regions span residues 386-414 (TNAKSKFQKGKESKLVTNQSTSEDQPLFK), 436-479 (PILK…QTGK), and 521-551 (QGKDRLPLSTGPASRLAAKSPIRETMKESES). Positions 400–409 (LVTNQSTSED) are enriched in polar residues. Serine 540 bears the Phosphoserine mark. Positions 541-550 (PIRETMKESE) are enriched in basic and acidic residues. Serine 589 carries the post-translational modification Phosphoserine; by PLK2. The residue at position 595 (serine 595) is a Phosphoserine; by PLK2 and PLK4. 3 disordered regions span residues 611–789 (HRMS…LSLS), 845–865 (VKRGEDLSKSRRSRSPPTSEL), and 1096–1153 (YLPM…QGEI). A compositionally biased stretch (basic and acidic residues) spans 635 to 650 (NRSEDLDHTAREKESE). Positions 679–689 (QKSTSENQTEW) are enriched in polar residues. The span at 717–764 (STEDRERGISSREDSPQVCDDKGPFKDTRTQEDKRRDVDLDLSDKDYS) shows a compositional bias: basic and acidic residues. Position 759 is a phosphoserine (serine 759). Residues 895–1338 (QPPGDNARSQ…EGNVLMDTEL (444 aa)) form an interaction with STIL region. Positions 1140–1149 (YKEEEEDQDI) are enriched in acidic residues.

It belongs to the TCP10 family. As to quaternary structure, forms homodimers. Associates with microtubules plus ends; binds to beta-tubulin subunits exposed on microtubule outer surface at its distal tip; also associates with microtubule lattice. Associated with the gamma-tubulin complex. Interacts with the head domain of EPB41. Interacts with LYST. Interacts with CEP152 (via C-terminus). Interacts with STIL. Forms a complex with STIL and SASS6. Phosphorylation at Ser-589 and Ser-595 by PLK2 is required for procentriole formation and centriole elongation. Phosphorylation by PLK2 oscillates during the cell cycle: it increases at G1/S transition and decreases during the exit from mitosis. Phosphorylation at Ser-595 is also mediated by PLK4 but is not a critical step in PLK4 function in procentriole assembly.

It is found in the cytoplasm. The protein localises to the cytoskeleton. The protein resides in the microtubule organizing center. Its subcellular location is the centrosome. It localises to the centriole. In terms of biological role, plays an important role in cell division and centrosome function by participating in centriole duplication. Inhibits microtubule nucleation from the centrosome. Involved in the regulation of slow processive growth of centriolar microtubules. Acts as a microtubule plus-end tracking protein that stabilizes centriolar microtubules and inhibits microtubule polymerization and extension from the distal ends of centrioles. Required for centriole elongation and for STIL-mediated centriole amplification. Required for the recruitment of CEP295 to the proximal end of new-born centrioles at the centriolar microtubule wall during early S phase in a PLK4-dependent manner. May be involved in the control of centriolar-microtubule growth by acting as a regulator of tubulin release. The polypeptide is Centrosomal P4.1-associated protein (Homo sapiens (Human)).